The sequence spans 97 residues: Theromacin (97 aa).

The first 22 residues, 1–22 (MELKSGLSILLCFGICIAVINA), serve as a signal peptide directing secretion. 5 cysteine pairs are disulfide-bonded: Cys-24–Cys-31, Cys-46–Cys-50, Cys-53–Cys-95, Cys-61–Cys-69, and Cys-79–Cys-81.

In terms of tissue distribution, coelomic liquid (at protein level). Expressed in large fat cells in contact with coelomic cavities, in intestinal epithelia and at the epidermis level.

It localises to the secreted. Its function is as follows. Has a bactericidal activity. Active against M.luteus. No activity toward E.coli and F.oxysporum. The chain is Theromacin from Theromyzon tessulatum (Duck leech).